Here is a 524-residue protein sequence, read N- to C-terminus: Rho guanine nucleotide exchange factor 3 (524 aa).

A phosphoserine mark is found at Ser46 and Ser69. The 183-residue stretch at 121 to 303 (KRQEAIFELS…QGIVAEINTK (183 aa)) folds into the DH domain. The PH domain maps to 290-448 (INIIQGIVAE…WLNCIRQAKE (159 aa)). The interval 461 to 524 (DSEGLVQGPG…CANSRPEESV (64 aa)) is disordered. Positions 472–484 (ENREPQGETKLEQ) are enriched in basic and acidic residues.

As to quaternary structure, interacts with RHOA and RHOB.

The protein localises to the cytoplasm. Its function is as follows. Acts as a guanine nucleotide exchange factor (GEF) for RhoA and RhoB GTPases. This is Rho guanine nucleotide exchange factor 3 (Arhgef3) from Mus musculus (Mouse).